The sequence spans 1376 residues: Major capsid protein (1376 aa).

It belongs to the herpesviridae major capsid protein family. In terms of assembly, homomultimer. Makes the hexons and eleven out of twelve pentons. Interacts with triplex proteins 1/TRX1 and 2/TRX2; adjacent capsomers are linked together in groups of three by triplexes, heterotrimeric complexes composed of one molecule of TRX1 and two molecules of TRX2. Interacts with scaffold protein; this interaction allows efficient MCP transport to the host nucleus. Interacts with capsid vertex component 2/CVC2. Interacts with the small capsomere-interacting protein/SCP.

Its subcellular location is the virion. It localises to the host nucleus. Functionally, self-assembles to form an icosahedral capsid with a T=16 symmetry, about 200 nm in diameter, and consisting of 150 hexons and 12 pentons (total of 162 capsomers). Hexons form the edges and faces of the capsid and are each composed of six MCP molecules. In contrast, one penton is found at each of the 12 vertices. Eleven of the pentons are MCP pentamers, while the last vertex is occupied by the portal complex. The capsid is surrounded by a layer of proteinaceous material designated the tegument which, in turn, is enclosed in an envelope of host cell-derived lipids containing virus-encoded glycoproteins. This Equus caballus (Horse) protein is Major capsid protein.